The chain runs to 369 residues: MSIAEPILLTPGPLTTSARTRQAMLVDWGSWDDRFNQLTASLCQQLLAIIQGADSHHCVPLQGSGTFAVEAAIGTLVPRDGKVLVLINGAYGKRLAKICEVLGRDFSTFETAEDQPTTAADVERLLQADSSISHVALIHCETSTGILNPLPEIAQVVASHGKRLIIDAMSSFGALPIDAREIPFDALIAASGKCLEGVPGMGFVFAAKASLAQAGGNAHSLAMDLHDQHSYMAKTGQWRFTPPTHVVAALHEALLQYAEEGGLPARHARYADNCQTLLDGMGELGLRSFLPEAIQAPIIVTFHAPKDPRYQFKDFYERVKAKGFILYPGKLTQVETFRVGCIGHVDRRGMQAAVAAIAEVLQEMEVLDI.

Residue Lys-193 is modified to N6-(pyridoxal phosphate)lysine.

This sequence belongs to the class-V pyridoxal-phosphate-dependent aminotransferase family. PhnW subfamily. In terms of assembly, homodimer. Requires pyridoxal 5'-phosphate as cofactor.

The enzyme catalyses (2-aminoethyl)phosphonate + pyruvate = phosphonoacetaldehyde + L-alanine. Functionally, involved in phosphonate degradation. The chain is 2-aminoethylphosphonate--pyruvate transaminase from Pseudomonas fluorescens (strain ATCC BAA-477 / NRRL B-23932 / Pf-5).